Consider the following 454-residue polypeptide: Probable diacyglycerol O-acyltransferase tgs2 (454 aa).

His139 serves as the catalytic Proton acceptor.

This sequence belongs to the long-chain O-acyltransferase family.

The enzyme catalyses an acyl-CoA + a 1,2-diacyl-sn-glycerol = a triacyl-sn-glycerol + CoA. It carries out the reaction a long chain fatty alcohol + a fatty acyl-CoA = a wax ester + CoA. The protein operates within glycerolipid metabolism; triacylglycerol biosynthesis. In terms of biological role, catalyzes the terminal and only committed step in triacylglycerol synthesis by using diacylglycerol and fatty acyl CoA as substrates. Required for storage lipid synthesis. This is Probable diacyglycerol O-acyltransferase tgs2 (tgs2) from Mycobacterium tuberculosis (strain CDC 1551 / Oshkosh).